The chain runs to 142 residues: Large ribosomal subunit protein uL11 (142 aa).

The protein belongs to the universal ribosomal protein uL11 family. Part of the ribosomal stalk of the 50S ribosomal subunit. Interacts with L10 and the large rRNA to form the base of the stalk. L10 forms an elongated spine to which L12 dimers bind in a sequential fashion forming a multimeric L10(L12)X complex. Post-translationally, one or more lysine residues are methylated.

In terms of biological role, forms part of the ribosomal stalk which helps the ribosome interact with GTP-bound translation factors. In Cronobacter sakazakii (strain ATCC BAA-894) (Enterobacter sakazakii), this protein is Large ribosomal subunit protein uL11.